The primary structure comprises 41 residues: Bacteriocin bavaricin-A (41 aa).

Belongs to the bacteriocin class IIA/YGNGV family.

It is found in the secreted. Its function is as follows. This heat stable bacteriocin shows activity against species of Lactobacillus, Listeria monocytogenes, Pediococcus, Enterococcus, Leuconostoc and Lactococcus. This Latilactobacillus sakei (Lactobacillus sakei) protein is Bacteriocin bavaricin-A.